The primary structure comprises 458 residues: Adenylosuccinate synthetase (458 aa).

Residues 17 to 23 (GDEGKGK) and 45 to 47 (GHT) contribute to the GTP site. The active-site Proton acceptor is the aspartate 18. Positions 18 and 45 each coordinate Mg(2+). IMP contacts are provided by residues 18–21 (DEGK), 43–46 (NAGH), threonine 137, arginine 151, glutamine 247, threonine 262, and arginine 330. The active-site Proton donor is the histidine 46. 326 to 332 (VTTGRSR) provides a ligand contact to substrate. GTP contacts are provided by residues arginine 332, 358 to 360 (KLD), and 440 to 442 (STS).

Belongs to the adenylosuccinate synthetase family. In terms of assembly, homodimer. Requires Mg(2+) as cofactor.

It is found in the cytoplasm. The enzyme catalyses IMP + L-aspartate + GTP = N(6)-(1,2-dicarboxyethyl)-AMP + GDP + phosphate + 2 H(+). The protein operates within purine metabolism; AMP biosynthesis via de novo pathway; AMP from IMP: step 1/2. In terms of biological role, plays an important role in the de novo pathway of purine nucleotide biosynthesis. Catalyzes the first committed step in the biosynthesis of AMP from IMP. The sequence is that of Adenylosuccinate synthetase from Acidovorax sp. (strain JS42).